The primary structure comprises 162 residues: Large ribosomal subunit protein uL10 (162 aa).

It belongs to the universal ribosomal protein uL10 family. Part of the ribosomal stalk of the 50S ribosomal subunit. The N-terminus interacts with L11 and the large rRNA to form the base of the stalk. The C-terminus forms an elongated spine to which L12 dimers bind in a sequential fashion forming a multimeric L10(L12)X complex.

Forms part of the ribosomal stalk, playing a central role in the interaction of the ribosome with GTP-bound translation factors. This Borrelia garinii subsp. bavariensis (strain ATCC BAA-2496 / DSM 23469 / PBi) (Borreliella bavariensis) protein is Large ribosomal subunit protein uL10.